Reading from the N-terminus, the 220-residue chain is uncharacterized protein (220 aa).

Residues 1-50 (MTDDVRDVNTETTDATEVAEIDSAAGEAGDSATEAFDTDSATESTAQKGQ) form a disordered region. Residues 39–48 (DSATESTAQK) show a composition bias toward polar residues. A helical membrane pass occupies residues 65 to 85 (VPVILILLMLISGGATGWLYL).

This sequence to M.tuberculosis Rv1363c.

The protein localises to the membrane. This is an uncharacterized protein from Mycobacterium tuberculosis (strain CDC 1551 / Oshkosh).